A 171-amino-acid polypeptide reads, in one-letter code: Shikimate kinase (171 aa).

14–19 (GAGKST) lines the ATP pocket. Ser18 contacts Mg(2+). Residues Asp36, Arg60, and Gly82 each coordinate substrate. Residue Arg120 participates in ATP binding. Substrate is bound at residue Arg139. Gln156 is an ATP binding site.

The protein belongs to the shikimate kinase family. In terms of assembly, monomer. Requires Mg(2+) as cofactor.

The protein localises to the cytoplasm. The catalysed reaction is shikimate + ATP = 3-phosphoshikimate + ADP + H(+). The protein operates within metabolic intermediate biosynthesis; chorismate biosynthesis; chorismate from D-erythrose 4-phosphate and phosphoenolpyruvate: step 5/7. In terms of biological role, catalyzes the specific phosphorylation of the 3-hydroxyl group of shikimic acid using ATP as a cosubstrate. The sequence is that of Shikimate kinase from Shewanella frigidimarina (strain NCIMB 400).